The following is a 132-amino-acid chain: MARVTVEDCIDKVDNRFELVLLAGHRARQISQGAQVTVDRDNDKNPVVALREIAEETLSPADLKEDLIHSLQKHVEVDEPEMANEFLSHSGEAETVFATTSEEESCSFDCMSEEDLLAGIEGLVIPEKSDDY.

It belongs to the RNA polymerase subunit omega family. As to quaternary structure, the RNAP catalytic core consists of 2 alpha, 1 beta, 1 beta' and 1 omega subunit. When a sigma factor is associated with the core the holoenzyme is formed, which can initiate transcription.

It carries out the reaction RNA(n) + a ribonucleoside 5'-triphosphate = RNA(n+1) + diphosphate. Its function is as follows. Promotes RNA polymerase assembly. Latches the N- and C-terminal regions of the beta' subunit thereby facilitating its interaction with the beta and alpha subunits. The sequence is that of DNA-directed RNA polymerase subunit omega from Bartonella quintana (strain Toulouse) (Rochalimaea quintana).